The following is a 218-amino-acid chain: Elongation factor Ts (218 aa).

The tract at residues 82-85 is involved in Mg(2+) ion dislocation from EF-Tu; that stretch reads TDFV.

This sequence belongs to the EF-Ts family.

Its subcellular location is the cytoplasm. Functionally, associates with the EF-Tu.GDP complex and induces the exchange of GDP to GTP. It remains bound to the aminoacyl-tRNA.EF-Tu.GTP complex up to the GTP hydrolysis stage on the ribosome. The polypeptide is Elongation factor Ts (Picosynechococcus sp. (strain ATCC 27264 / PCC 7002 / PR-6) (Agmenellum quadruplicatum)).